A 266-amino-acid polypeptide reads, in one-letter code: Capsid protein (266 aa).

Positions 2 to 71 (AKRLTKQQLT…REPSLRTAGG (70 aa)) are r domain, interaction with RNA. The tract at residues 13-51 (AIANTLEAPATQSRRPRNRRRRRSAARQPQSTQAGVSMA) is disordered. The segment covering 26–37 (RRPRNRRRRRSA) has biased composition (basic residues). Residues 72-257 (VTVLTHSELS…LYVSYTIQLI (186 aa)) form a s domain, virion shell region. A disulfide bond links C175 and C182. Residues 258-266 (EPTALALNN) form a p domain, projecting region.

This sequence belongs to the icosahedral plant coat protein family.

Its subcellular location is the virion. In terms of biological role, capsid protein self-assembles to form an icosahedral capsid with a T=3 symmetry, about 30 nm in diameter, and consisting of 180 capsid proteins. Each icosahedral unit contains three protein subunits (Potential). This Southern bean mosaic virus (isolate Bean/United States/Arkansas) (SBMV) protein is Capsid protein.